The primary structure comprises 759 residues: uncharacterized protein (759 aa).

Disordered stretches follow at residues 269-328 and 406-759; these read SQRV…GEEP and LPLR…AQTA. Over residues 289–299 the composition is skewed to basic and acidic residues; sequence AGGKEEAERGG. Residues 406-415 show a composition bias toward low complexity; the sequence is LPLRPPSGSG. Positions 417-430 are enriched in basic and acidic residues; that stretch reads AARKPGYEKEEGRG. Positions 431-444 are enriched in low complexity; sequence RATTASATAATSPR. Basic and acidic residues-rich tracts occupy residues 469–518 and 525–545; these read PESE…RGEH and DSGREEDAQESEVARRDEKGT. Pro residues predominate over residues 585–599; the sequence is WVPPPHLLFPSPLPS. Positions 659–680 are enriched in low complexity; sequence SLSSLSSSSSSSSSSSPSYSPS. Residues 681–690 are compositionally biased toward pro residues; the sequence is PLSPPSPVSP. Low complexity-rich tracts occupy residues 691–704 and 728–746; these read SSPRSPFISPIRSP and PPFSKRVPSVPSSASPSAP.

This is an uncharacterized protein from Human herpesvirus 6B (strain Z29) (HHV-6 variant B).